We begin with the raw amino-acid sequence, 242 residues long: Protein GrpE (242 aa).

Disordered stretches follow at residues 1 to 75 (MSDD…DDEL) and 93 to 136 (VADL…QQIK). Residues 23–37 (DAESSAAEDASAADD) show a composition bias toward low complexity. Positions 38 to 49 (AAPEESTGDEQA) are enriched in acidic residues. A compositionally biased stretch (polar residues) spans 50–64 (GETTAESSDAESVTV). Over residues 96–108 (LETERDEAEETAS) the composition is skewed to acidic residues. Basic residues predominate over residues 124-133 (YKKRAKKRQQ).

It belongs to the GrpE family. Homodimer.

The protein localises to the cytoplasm. Its function is as follows. Participates actively in the response to hyperosmotic and heat shock by preventing the aggregation of stress-denatured proteins, in association with DnaK and GrpE. It is the nucleotide exchange factor for DnaK and may function as a thermosensor. Unfolded proteins bind initially to DnaJ; upon interaction with the DnaJ-bound protein, DnaK hydrolyzes its bound ATP, resulting in the formation of a stable complex. GrpE releases ADP from DnaK; ATP binding to DnaK triggers the release of the substrate protein, thus completing the reaction cycle. Several rounds of ATP-dependent interactions between DnaJ, DnaK and GrpE are required for fully efficient folding. The protein is Protein GrpE of Haloferax mediterranei (strain ATCC 33500 / DSM 1411 / JCM 8866 / NBRC 14739 / NCIMB 2177 / R-4) (Halobacterium mediterranei).